A 373-amino-acid polypeptide reads, in one-letter code: Enoyl-[acyl-carrier-protein] reductase, mitochondrial (373 aa).

A mitochondrion-targeting transit peptide spans 1-53 (MLVSRRLTGARARAPLLASLLEAWCRQGRTTSSYSAFSEPSHVRALVYGNHGD). Position 61 is an N6-acetyllysine; alternate (Lys61). An N6-succinyllysine; alternate modification is found at Lys61. The Proton donor role is filled by Tyr94. Residues Asn167, 193–196 (NSGV), and 216–218 (RDR) each bind NADP(+). Residues Lys252 and Lys267 each carry the N6-acetyllysine; alternate modification. 2 positions are modified to N6-succinyllysine; alternate: Lys252 and Lys267. Residues 285-288 (YGGM) and 310-312 (FWL) contribute to the NADP(+) site. Lys316 carries the post-translational modification N6-succinyllysine. Residue Lys368 participates in NADP(+) binding.

Belongs to the zinc-containing alcohol dehydrogenase family. Quinone oxidoreductase subfamily. As to quaternary structure, homodimer. Interacts with PPARA in the nucleus and increases its activity.

It localises to the mitochondrion. The protein resides in the cytoplasm. It is found in the nucleus. The enzyme catalyses a 2,3-saturated acyl-[ACP] + NADP(+) = a (2E)-enoyl-[ACP] + NADPH + H(+). It catalyses the reaction (2E)-butenoyl-[ACP] + NADPH + H(+) = butanoyl-[ACP] + NADP(+). It carries out the reaction (2E)-hexenoyl-[ACP] + NADPH + H(+) = hexanoyl-[ACP] + NADP(+). The catalysed reaction is (2E)-octenoyl-[ACP] + NADPH + H(+) = octanoyl-[ACP] + NADP(+). The enzyme catalyses (2E)-decenoyl-[ACP] + NADPH + H(+) = decanoyl-[ACP] + NADP(+). It catalyses the reaction (2E)-dodecenoyl-[ACP] + NADPH + H(+) = dodecanoyl-[ACP] + NADP(+). It carries out the reaction (2E)-tetradecenoyl-[ACP] + NADPH + H(+) = tetradecanoyl-[ACP] + NADP(+). The catalysed reaction is (2E)-hexadecenoyl-[ACP] + NADPH + H(+) = hexadecanoyl-[ACP] + NADP(+). Catalyzes the NADPH-dependent reduction of trans-2-enoyl thioesters in mitochondrial fatty acid synthesis (fatty acid synthesis type II). Fatty acid chain elongation in mitochondria uses acyl carrier protein (ACP) as an acyl group carrier, but the enzyme accepts both ACP and CoA thioesters as substrates in vitro. Displays a preference for medium-chain over short- and long-chain substrates. May provide the octanoyl chain used for lipoic acid biosynthesis, regulating protein lipoylation and mitochondrial respiratory activity particularly in Purkinje cells. Involved in iron homeostasis; affecting Fe-S cluster assembly and ceramide metabolism. Required for proper morphology and bioenergetic functions of mitochondria. Required for maintenance of neurons. The protein is Enoyl-[acyl-carrier-protein] reductase, mitochondrial (Mecr) of Rattus norvegicus (Rat).